The primary structure comprises 257 residues: Imidazole glycerol phosphate synthase subunit HisF (257 aa).

Residues Asp-11 and Asp-130 contribute to the active site.

This sequence belongs to the HisA/HisF family. In terms of assembly, heterodimer of HisH and HisF.

It localises to the cytoplasm. It carries out the reaction 5-[(5-phospho-1-deoxy-D-ribulos-1-ylimino)methylamino]-1-(5-phospho-beta-D-ribosyl)imidazole-4-carboxamide + L-glutamine = D-erythro-1-(imidazol-4-yl)glycerol 3-phosphate + 5-amino-1-(5-phospho-beta-D-ribosyl)imidazole-4-carboxamide + L-glutamate + H(+). It functions in the pathway amino-acid biosynthesis; L-histidine biosynthesis; L-histidine from 5-phospho-alpha-D-ribose 1-diphosphate: step 5/9. In terms of biological role, IGPS catalyzes the conversion of PRFAR and glutamine to IGP, AICAR and glutamate. The HisF subunit catalyzes the cyclization activity that produces IGP and AICAR from PRFAR using the ammonia provided by the HisH subunit. This chain is Imidazole glycerol phosphate synthase subunit HisF, found in Actinobacillus pleuropneumoniae serotype 7 (strain AP76).